A 236-amino-acid polypeptide reads, in one-letter code: tRNA1(Val) (adenine(37)-N6)-methyltransferase (236 aa).

This sequence belongs to the methyltransferase superfamily. tRNA (adenine-N(6)-)-methyltransferase family.

The protein resides in the cytoplasm. It catalyses the reaction adenosine(37) in tRNA1(Val) + S-adenosyl-L-methionine = N(6)-methyladenosine(37) in tRNA1(Val) + S-adenosyl-L-homocysteine + H(+). Specifically methylates the adenine in position 37 of tRNA(1)(Val) (anticodon cmo5UAC). This Shewanella sp. (strain MR-7) protein is tRNA1(Val) (adenine(37)-N6)-methyltransferase.